Reading from the N-terminus, the 396-residue chain is NADH-quinone oxidoreductase subunit D (396 aa).

This sequence belongs to the complex I 49 kDa subunit family. In terms of assembly, NDH-1 is composed of 14 different subunits. Subunits NuoB, C, D, E, F, and G constitute the peripheral sector of the complex.

Its subcellular location is the cell inner membrane. It catalyses the reaction a quinone + NADH + 5 H(+)(in) = a quinol + NAD(+) + 4 H(+)(out). Its function is as follows. NDH-1 shuttles electrons from NADH, via FMN and iron-sulfur (Fe-S) centers, to quinones in the respiratory chain. The immediate electron acceptor for the enzyme in this species is believed to be ubiquinone. Couples the redox reaction to proton translocation (for every two electrons transferred, four hydrogen ions are translocated across the cytoplasmic membrane), and thus conserves the redox energy in a proton gradient. This Chelativorans sp. (strain BNC1) protein is NADH-quinone oxidoreductase subunit D.